The primary structure comprises 270 residues: Flagellar hook-basal body complex protein FlhO (270 aa).

The protein belongs to the flagella basal body rod proteins family.

Not required for motility. The protein is Flagellar hook-basal body complex protein FlhO (flhO) of Bacillus subtilis (strain 168).